Consider the following 568-residue polypeptide: Oxygen-dependent choline dehydrogenase (568 aa).

8–37 lines the FAD pocket; the sequence is DYIIIGAGSAGNTLAARLTEDAGVTVLLLE. His-477 serves as the catalytic Proton acceptor.

The protein belongs to the GMC oxidoreductase family. It depends on FAD as a cofactor.

It catalyses the reaction choline + A = betaine aldehyde + AH2. The enzyme catalyses betaine aldehyde + NAD(+) + H2O = glycine betaine + NADH + 2 H(+). Its pathway is amine and polyamine biosynthesis; betaine biosynthesis via choline pathway; betaine aldehyde from choline (cytochrome c reductase route): step 1/1. In terms of biological role, involved in the biosynthesis of the osmoprotectant glycine betaine. Catalyzes the oxidation of choline to betaine aldehyde and betaine aldehyde to glycine betaine at the same rate. This chain is Oxygen-dependent choline dehydrogenase, found in Pseudomonas savastanoi pv. phaseolicola (strain 1448A / Race 6) (Pseudomonas syringae pv. phaseolicola (strain 1448A / Race 6)).